The chain runs to 442 residues: CAAX prenyl protease 1 homolog (442 aa).

Topologically, residues M1–H62 are lumenal. A helical membrane pass occupies residues L63–G83. Position 84 (Y84) is a topological domain, cytoplasmic. A helical membrane pass occupies residues Y85 to I105. Topologically, residues N106–K146 are lumenal. Residues M147–N167 traverse the membrane as a helical segment. Over G168 to P170 the chain is Cytoplasmic. The helical transmembrane segment at Y171–Y191 threads the bilayer. The Lumenal portion of the chain corresponds to P192–T311. H301 serves as a coordination point for Zn(2+). Residue E302 is part of the active site. Residue H305 participates in Zn(2+) binding. A helical transmembrane segment spans residues L312–F332. Residues Y333 to P349 are Cytoplasmic-facing. The chain crosses the membrane as a helical span at residues V350 to I370. Over G371 to K442 the chain is Lumenal. A Zn(2+)-binding site is contributed by E380. D384 (proton donor) is an active-site residue.

The protein belongs to the peptidase M48A family. Zn(2+) is required as a cofactor.

It is found in the endoplasmic reticulum membrane. The protein resides in the membrane. The catalysed reaction is Hydrolyzes the peptide bond -P2-(S-farnesyl or geranylgeranyl)C-P1'-P2'-P3'-COOH where P1' and P2' are amino acids with aliphatic side chains and P3' is any C-terminal residue.. Proteolytically removes the C-terminal three residues of farnesylated proteins. In Caenorhabditis elegans, this protein is CAAX prenyl protease 1 homolog.